The following is a 359-amino-acid chain: DNA polymerase IV (359 aa).

A UmuC domain is found at 4-185 (IIHVDMDCFF…LALIKIPGVG (182 aa)). Residues Asp8 and Asp103 each coordinate Mg(2+). Residue Glu104 is part of the active site.

It belongs to the DNA polymerase type-Y family. As to quaternary structure, monomer. Mg(2+) serves as cofactor.

The protein localises to the cytoplasm. It catalyses the reaction DNA(n) + a 2'-deoxyribonucleoside 5'-triphosphate = DNA(n+1) + diphosphate. Its function is as follows. Poorly processive, error-prone DNA polymerase involved in untargeted mutagenesis. Copies undamaged DNA at stalled replication forks, which arise in vivo from mismatched or misaligned primer ends. These misaligned primers can be extended by PolIV. Exhibits no 3'-5' exonuclease (proofreading) activity. May be involved in translesional synthesis, in conjunction with the beta clamp from PolIII. This Shewanella loihica (strain ATCC BAA-1088 / PV-4) protein is DNA polymerase IV.